We begin with the raw amino-acid sequence, 469 residues long: Glutamate--tRNA ligase 1 (469 aa).

A 'HIGH' region motif is present at residues 9-19 (PSPTGYLHVGG). Zn(2+) contacts are provided by C98, C100, C125, and E127. The 'KMSKS' region signature appears at 236 to 240 (RLSKR). K239 contributes to the ATP binding site.

This sequence belongs to the class-I aminoacyl-tRNA synthetase family. Glutamate--tRNA ligase type 1 subfamily. In terms of assembly, monomer. It depends on Zn(2+) as a cofactor.

It localises to the cytoplasm. It catalyses the reaction tRNA(Glu) + L-glutamate + ATP = L-glutamyl-tRNA(Glu) + AMP + diphosphate. Its function is as follows. Catalyzes the attachment of glutamate to tRNA(Glu) in a two-step reaction: glutamate is first activated by ATP to form Glu-AMP and then transferred to the acceptor end of tRNA(Glu). The polypeptide is Glutamate--tRNA ligase 1 (Nitrosococcus oceani (strain ATCC 19707 / BCRC 17464 / JCM 30415 / NCIMB 11848 / C-107)).